The primary structure comprises 137 residues: TSC22 domain family protein 3 (137 aa).

Residues 1-60 form an AP1-binding region; sequence MNTEMYQTPMEVAVYQLHNFSISFFSSLLGGDVVSVKLDNSASGASVVALDNKIEQAMDL. Residues Asn40 and Val73 each carry the phosphoserine modification. A leucine-zipper region spans residues 76–97; sequence LKEQIRELLEKNSQLERENTLL. Residues 101 to 137 form a disordered region; it reads ASPEQLEKFQSRLSPEEPAPEAPETPETPEAPGGSAV. Ser102 bears the Phosphoserine mark. A phosphothreonine mark is found at Thr125 and Thr128. Low complexity predominate over residues 128 to 137; it reads TPEAPGGSAV.

Belongs to the TSC-22/Dip/Bun family. In terms of assembly, can form homodimers, however it is likely to function as a monomer. Interacts with NFKB1. Interacts (via N-terminus) with JUN and FOS; these interactions inhibit the binding of active AP1 to its target DNA. As to quaternary structure, interacts with MYOD1. Interacts with HDAC1; this interaction affects HDAC1 activity on MYOG promoter and thus inhibits MYOD1 transcriptional activity. Interacts with MYOD1. Expressed in T-cells. Expression inversely correlates with T-cell activation, being higher in resting cells and lower in cells activated by TCR/CD3 triggering (at protein level). Constitutively expressed in lung, intestine, kidney and liver, most probably by resident cells from the macrophage lineage. Expressed in thymus, lymph nodes, bone marrow, spleen, lung and skeletal muscle. In terms of tissue distribution, expressed in spleen and skeletal muscle (at protein level). Expressed in the cortex, medulla and papilla of the kidney. As to expression, expressed in the cortex, medulla and papilla of the kidney. Expressed in spleen and skeletal muscle (at protein level).

It localises to the cytoplasm. The protein localises to the nucleus. Functionally, protects T-cells from IL2 deprivation-induced apoptosis through the inhibition of FOXO3A transcriptional activity that leads to the down-regulation of the pro-apoptotic factor BCL2L11. In macrophages, plays a role in the anti-inflammatory and immunosuppressive effects of glucocorticoids and IL10. In T-cells, inhibits anti-CD3-induced NFKB1 nuclear translocation and thereby NFKB1 DNA-binding activities. In vitro, suppresses AP-1 transcription factor complex DNA-binding activities. Inhibits myogenic differentiation and mediates anti-myogenic effects of glucocorticoids by binding and regulating MYOD1 and HDAC1 transcriptional activity resulting in reduced expression of MYOG. This Mus musculus (Mouse) protein is TSC22 domain family protein 3.